A 161-amino-acid polypeptide reads, in one-letter code: Regulator of ribonuclease activity A (161 aa).

The protein belongs to the RraA family. Homotrimer. Binds to both RNA-binding sites in the C-terminal region of Rne and to RhlB.

The protein localises to the cytoplasm. Functionally, globally modulates RNA abundance by binding to RNase E (Rne) and regulating its endonucleolytic activity. Can modulate Rne action in a substrate-dependent manner by altering the composition of the degradosome. Modulates RNA-binding and helicase activities of the degradosome. This is Regulator of ribonuclease activity A from Shigella flexneri serotype 5b (strain 8401).